The primary structure comprises 99 residues: YcgL domain-containing protein HD_1373 (99 aa).

One can recognise a YcgL domain in the interval 8-92; sequence NFCAIYKSMS…PAENLLKQFL (85 aa).

The sequence is that of YcgL domain-containing protein HD_1373 from Haemophilus ducreyi (strain 35000HP / ATCC 700724).